We begin with the raw amino-acid sequence, 366 residues long: Chorismate synthase (366 aa).

R48 contacts NADP(+). FMN contacts are provided by residues 125-127, 241-242, G285, 300-304, and R326; these read RSS, NA, and KPTSS.

Belongs to the chorismate synthase family. In terms of assembly, homotetramer. FMNH2 serves as cofactor.

The enzyme catalyses 5-O-(1-carboxyvinyl)-3-phosphoshikimate = chorismate + phosphate. It participates in metabolic intermediate biosynthesis; chorismate biosynthesis; chorismate from D-erythrose 4-phosphate and phosphoenolpyruvate: step 7/7. Catalyzes the anti-1,4-elimination of the C-3 phosphate and the C-6 proR hydrogen from 5-enolpyruvylshikimate-3-phosphate (EPSP) to yield chorismate, which is the branch point compound that serves as the starting substrate for the three terminal pathways of aromatic amino acid biosynthesis. This reaction introduces a second double bond into the aromatic ring system. The sequence is that of Chorismate synthase from Paracoccus denitrificans (strain Pd 1222).